A 364-amino-acid polypeptide reads, in one-letter code: Dihydroorotate dehydrogenase (quinone) (364 aa).

FMN is bound by residues 61 to 65 (AGFDK) and S85. K65 provides a ligand contact to substrate. 110–114 (NRMGF) provides a ligand contact to substrate. Positions 139 and 170 each coordinate FMN. N170 serves as a coordination point for substrate. S173 acts as the Nucleophile in catalysis. N175 is a substrate binding site. FMN contacts are provided by K214 and S242. A substrate-binding site is contributed by 243–244 (NT). FMN is bound by residues G266, G295, and 316–317 (YS).

The protein belongs to the dihydroorotate dehydrogenase family. Type 2 subfamily. In terms of assembly, monomer. The cofactor is FMN.

The protein localises to the cell membrane. It carries out the reaction (S)-dihydroorotate + a quinone = orotate + a quinol. Its pathway is pyrimidine metabolism; UMP biosynthesis via de novo pathway; orotate from (S)-dihydroorotate (quinone route): step 1/1. Catalyzes the conversion of dihydroorotate to orotate with quinone as electron acceptor. This Bradyrhizobium sp. (strain BTAi1 / ATCC BAA-1182) protein is Dihydroorotate dehydrogenase (quinone).